We begin with the raw amino-acid sequence, 408 residues long: NADH-quinone oxidoreductase subunit H (408 aa).

Transmembrane regions (helical) follow at residues 18–38, 84–104, 124–144, 165–185, 198–218, 261–281, 288–308, 321–341, and 353–373; these read LAKAVAIFVFLLLTVLSAILI, PIYLLAPVISVIPAFVAFSVI, LPVAVLFILAATSIGVYGIVL, VVSYEIAMGLSFVAVFLYAGT, TWFVFLLLPSFLVYVVSMVGE, SALATTMFLGGWHAPFPFNLI, WWPLLWFTAKVWTFMFLYFWL, MALGWKVLIPVSLLWIMVVAI, and WAAWLLTAAVVVVVALIWGLA. The tract at residues 381–408 is disordered; sequence VQPPPPQSTGAYPVPPLPSVGTKETADA. The span at 382–398 shows a compositional bias: pro residues; that stretch reads QPPPPQSTGAYPVPPLP.

It belongs to the complex I subunit 1 family. NDH-1 is composed of 14 different subunits. Subunits NuoA, H, J, K, L, M, N constitute the membrane sector of the complex.

The protein resides in the cell membrane. The catalysed reaction is a quinone + NADH + 5 H(+)(in) = a quinol + NAD(+) + 4 H(+)(out). In terms of biological role, NDH-1 shuttles electrons from NADH, via FMN and iron-sulfur (Fe-S) centers, to quinones in the respiratory chain. The immediate electron acceptor for the enzyme in this species is believed to be menaquinone. Couples the redox reaction to proton translocation (for every two electrons transferred, four hydrogen ions are translocated across the cytoplasmic membrane), and thus conserves the redox energy in a proton gradient. This subunit may bind ubiquinone. The sequence is that of NADH-quinone oxidoreductase subunit H from Mycolicibacterium smegmatis (strain ATCC 700084 / mc(2)155) (Mycobacterium smegmatis).